The chain runs to 667 residues: Soluble guanylate cyclase 89Da (667 aa).

Histidine 104 is a binding site for heme. The interval 337–364 (AQEFSESHPVDDDESAREDEIDPATGER) is disordered. Residues 347–358 (DDDESAREDEID) show a composition bias toward acidic residues. A coiled-coil region spans residues 427–455 (QHCSKLEIMFEKEEQRSDELEKSLELADS). One can recognise a Guanylate cyclase domain in the interval 491 to 617 (SVIFLEVMNV…DTVNTASRME (127 aa)).

It belongs to the adenylyl cyclase class-4/guanylyl cyclase family. Heterodimer; with Gyc88E, in the presence of magnesium or manganese. Heme serves as cofactor.

It is found in the cytoplasm. The enzyme catalyses GTP = 3',5'-cyclic GMP + diphosphate. Probably not activated by nitric oxide (NO). Heterodimer also exhibits some stimulation, some compounds (SIN-1 and two of the NONOates) that were ineffective at stimulating Gyc-88E alone did stimulate the heterodimer. Its function is as follows. Heterodimers with Gyc-89Da and Gyc-89Db are activated in response to changing oxygen concentrations, alerting flies to hypoxic environments. Under normal oxygen concentrations, oxygen binds to the heme group and results in low levels of guanylyl cyclase activity. When exposed to reduced oxygen concentrations, the oxygen dissociates from the heme group resulting in activation of the enzyme. The protein is Soluble guanylate cyclase 89Da of Drosophila melanogaster (Fruit fly).